The chain runs to 1383 residues: ATP-dependent RNA helicase TDRD9 (1383 aa).

The segment at 35–82 (EAPREEVQRSEEVPNEDPTAQAQVPVKATAPARPASTSGRSLSQRSSE) is disordered. Positions 36 to 46 (APREEVQRSEE) are enriched in basic and acidic residues. Positions 70-80 (STSGRSLSQRS) are enriched in low complexity. One can recognise a Helicase ATP-binding domain in the interval 144 to 310 (ISLIESNSVV…FAVPVQNKMN (167 aa)). 157-164 (GATGSGKS) contacts ATP. Positions 256-259 (DEVH) match the DEAH box motif. The Helicase C-terminal domain maps to 378–545 (SGAQFVSERS…ILKVKLLDMG (168 aa)). The 61-residue stretch at 945–1005 (HPHPDLVCLA…REIPCQFLEL (61 aa)) folds into the Tudor domain.

This sequence belongs to the DEAD box helicase family. DEAH subfamily. In terms of assembly, interacts with piRNA-associated proteins PIWIL1 and PIWIL4. In terms of tissue distribution, predominantly expressed in reproductive organs. Detected in mitotic spermatogonia, meiotic spermatocytes (predominantly at the pachytene stage), haploid spermatids in the testis, and in growing oocytes in the ovary (at protein level).

It localises to the cytoplasm. Its subcellular location is the nucleus. The enzyme catalyses ATP + H2O = ADP + phosphate + H(+). Its function is as follows. ATP-binding RNA helicase which plays a central role during spermatogenesis by repressing transposable elements and preventing their mobilization, which is essential for the germline integrity. Acts via the piRNA metabolic process, which mediates the repression of transposable elements during meiosis by forming complexes composed of piRNAs and Piwi proteins and governs the methylation and subsequent repression of transposons. Acts downstream of piRNA biogenesis: exclusively required for transposon silencing in the nucleus, suggesting that it acts as a nuclear effector in the nucleus together with PIWIL4. In Mus musculus (Mouse), this protein is ATP-dependent RNA helicase TDRD9.